Here is a 371-residue protein sequence, read N- to C-terminus: Peptide chain release factor 2 (371 aa).

The residue at position 253 (glutamine 253) is an N5-methylglutamine.

The protein belongs to the prokaryotic/mitochondrial release factor family. Post-translationally, methylated by PrmC. Methylation increases the termination efficiency of RF2.

Its subcellular location is the cytoplasm. In terms of biological role, peptide chain release factor 2 directs the termination of translation in response to the peptide chain termination codons UGA and UAA. The polypeptide is Peptide chain release factor 2 (Mycobacterium sp. (strain KMS)).